The following is a 146-amino-acid chain: MGRFIFISFGLLVVFLSLSGTEAECLPDWFHYEGHCYRVFDEPKTWADAEKFCSEQANGGHLVSVHSKKEAGLVGVLAYQTLESPIVWMGLSKIWNQCDWTWTNGAKLKYEAWAEESYCIHITSKKKEWKSLPCRNYGHFVCKSPA.

An N-terminal signal peptide occupies residues 1 to 23 (MGRFIFISFGLLVVFLSLSGTEA). Disulfide bonds link Cys25–Cys36, Cys53–Cys142, and Cys119–Cys134. Residues 32 to 143 (YEGHCYRVFD…CRNYGHFVCK (112 aa)) enclose the C-type lectin domain.

It belongs to the snaclec family. Heterodimer; disulfide-linked. Expressed by the venom gland.

The protein resides in the secreted. In terms of biological role, interferes with one step of hemostasis (modulation of platelet aggregation, or coagulation cascade, for example). The protein is Snaclec 5 of Echis pyramidum leakeyi (Leakey's carpet viper).